The primary structure comprises 570 residues: Protein misato homolog 1 (570 aa).

S495 carries the post-translational modification Phosphoserine.

It belongs to the misato family.

It localises to the mitochondrion outer membrane. Its subcellular location is the cytoplasm. Its function is as follows. Involved in the regulation of mitochondrial distribution and morphology. Required for mitochondrial fusion and mitochondrial network formation. This is Protein misato homolog 1 (MSTO1) from Pongo pygmaeus (Bornean orangutan).